Here is a 564-residue protein sequence, read N- to C-terminus: Probable beta-glucosidase btgE (564 aa).

Residues methionine 1 to alanine 18 form the signal peptide. Residues alanine 285–alanine 304 form a disordered region. N-linked (GlcNAc...) asparagine glycosylation is present at asparagine 404. The Proton donor role is filled by glutamate 405. Glutamate 501 acts as the Nucleophile in catalysis.

The protein belongs to the glycosyl hydrolase 17 family.

It is found in the secreted. The protein resides in the cell wall. It catalyses the reaction Hydrolysis of terminal, non-reducing beta-D-glucosyl residues with release of beta-D-glucose.. It functions in the pathway glycan metabolism; cellulose degradation. Its function is as follows. Beta-glucosidases are one of a number of cellulolytic enzymes involved in the degradation of cellulosic biomass. Catalyzes the last step releasing glucose from the inhibitory cellobiose. The sequence is that of Probable beta-glucosidase btgE (btgE) from Aspergillus clavatus (strain ATCC 1007 / CBS 513.65 / DSM 816 / NCTC 3887 / NRRL 1 / QM 1276 / 107).